Here is a 227-residue protein sequence, read N- to C-terminus: MAYPFQLGLQDASSPIMEELMNFHDHTLMIVFLISSLVLYLMALMLSTKLIHTSTMDAQEVETIWTILPAIILIMIALPSLRILYMMDEINNPILTVKTMGHQWYWSYEYTDYEDLCFDSYMIPTNELKPGELRLLEVDNRIVLPMELPIRMLISSEDVLHSWAVPSLGLKTDAIPGRLNQATITSNRPGVFYGQCSEICGSNHSFMPIVLEMIPLKLFENWSMSMT.

Topologically, residues Met1–Ser14 are mitochondrial intermembrane. The helical transmembrane segment at Pro15 to Met45 threads the bilayer. Topologically, residues Leu46–Gln59 are mitochondrial matrix. Residues Glu60 to Met87 traverse the membrane as a helical segment. The Mitochondrial intermembrane portion of the chain corresponds to Asp88 to Thr227. Positions 161, 196, 198, 200, 204, and 207 each coordinate Cu cation. Glu198 contacts Mg(2+).

The protein belongs to the cytochrome c oxidase subunit 2 family. Component of the cytochrome c oxidase (complex IV, CIV), a multisubunit enzyme composed of 14 subunits. The complex is composed of a catalytic core of 3 subunits MT-CO1, MT-CO2 and MT-CO3, encoded in the mitochondrial DNA, and 11 supernumerary subunits COX4I, COX5A, COX5B, COX6A, COX6B, COX6C, COX7A, COX7B, COX7C, COX8 and NDUFA4, which are encoded in the nuclear genome. The complex exists as a monomer or a dimer and forms supercomplexes (SCs) in the inner mitochondrial membrane with NADH-ubiquinone oxidoreductase (complex I, CI) and ubiquinol-cytochrome c oxidoreductase (cytochrome b-c1 complex, complex III, CIII), resulting in different assemblies (supercomplex SCI(1)III(2)IV(1) and megacomplex MCI(2)III(2)IV(2)). Found in a complex with TMEM177, COA6, COX18, COX20, SCO1 and SCO2. Interacts with TMEM177 in a COX20-dependent manner. Interacts with COX20. Interacts with COX16. Cu cation serves as cofactor.

It localises to the mitochondrion inner membrane. The catalysed reaction is 4 Fe(II)-[cytochrome c] + O2 + 8 H(+)(in) = 4 Fe(III)-[cytochrome c] + 2 H2O + 4 H(+)(out). Functionally, component of the cytochrome c oxidase, the last enzyme in the mitochondrial electron transport chain which drives oxidative phosphorylation. The respiratory chain contains 3 multisubunit complexes succinate dehydrogenase (complex II, CII), ubiquinol-cytochrome c oxidoreductase (cytochrome b-c1 complex, complex III, CIII) and cytochrome c oxidase (complex IV, CIV), that cooperate to transfer electrons derived from NADH and succinate to molecular oxygen, creating an electrochemical gradient over the inner membrane that drives transmembrane transport and the ATP synthase. Cytochrome c oxidase is the component of the respiratory chain that catalyzes the reduction of oxygen to water. Electrons originating from reduced cytochrome c in the intermembrane space (IMS) are transferred via the dinuclear copper A center (CU(A)) of subunit 2 and heme A of subunit 1 to the active site in subunit 1, a binuclear center (BNC) formed by heme A3 and copper B (CU(B)). The BNC reduces molecular oxygen to 2 water molecules using 4 electrons from cytochrome c in the IMS and 4 protons from the mitochondrial matrix. The chain is Cytochrome c oxidase subunit 2 (MT-CO2) from Gerbillus gerbillus (Lesser Egyptian gerbil).